A 176-amino-acid chain; its full sequence is Large ribosomal subunit protein uL6 (176 aa).

A compositionally biased stretch (basic and acidic residues) spans 153 to 170; it reads PEPYKGKGIRYGDEEVRR. The disordered stretch occupies residues 153–176; sequence PEPYKGKGIRYGDEEVRRKEAKKK.

It belongs to the universal ribosomal protein uL6 family. Part of the 50S ribosomal subunit.

Functionally, this protein binds to the 23S rRNA, and is important in its secondary structure. It is located near the subunit interface in the base of the L7/L12 stalk, and near the tRNA binding site of the peptidyltransferase center. This chain is Large ribosomal subunit protein uL6, found in Chromohalobacter salexigens (strain ATCC BAA-138 / DSM 3043 / CIP 106854 / NCIMB 13768 / 1H11).